The following is a 248-amino-acid chain: 14-3-3 protein zeta (248 aa).

The protein belongs to the 14-3-3 family. Homodimer.

The protein resides in the cytoplasm. In terms of biological role, adapter protein implicated in the regulation of a large spectrum of both general and specialized signaling pathways. Binds to a large number of partners, usually by recognition of a phosphoserine or phosphothreonine motif. Binding generally results in the modulation of the activity of the binding partner. This is 14-3-3 protein zeta (14-3-3zeta) from Aedes aegypti (Yellowfever mosquito).